The sequence spans 322 residues: Polyisoprenyl-teichoic acid--peptidoglycan teichoic acid transferase TagT (322 aa).

Over 1 to 19 (MEERSQRRKKKRKLKKWVK) the chain is Cytoplasmic. The helical; Signal-anchor for type II membrane protein transmembrane segment at 20–40 (VVAGLMAFLVIAAGSVGAYAF) threads the bilayer. The Extracellular segment spans residues 41–322 (VKLNNASKEA…KKELQNDLGV (282 aa)).

The protein belongs to the LytR/CpsA/Psr (LCP) family. As to quaternary structure, interacts with MreB.

The protein localises to the cell membrane. It participates in cell wall biogenesis. In terms of biological role, may catalyze the final step in cell wall teichoic acid biosynthesis, the transfer of the anionic cell wall polymers (APs) from their lipid-linked precursor to the cell wall peptidoglycan (PG). This chain is Polyisoprenyl-teichoic acid--peptidoglycan teichoic acid transferase TagT, found in Bacillus subtilis (strain 168).